The sequence spans 336 residues: Anthranilate phosphoribosyltransferase (336 aa).

5-phospho-alpha-D-ribose 1-diphosphate contacts are provided by residues Gly-83, 86–87, Thr-91, 93–96, 111–119, and Ser-123; these read GD, NIST, and KHGNRSVSS. Residue Gly-83 coordinates anthranilate. Ser-95 is a binding site for Mg(2+). Anthranilate is bound at residue Asn-114. Arg-169 lines the anthranilate pocket. Mg(2+) contacts are provided by Asp-227 and Glu-228.

It belongs to the anthranilate phosphoribosyltransferase family. In terms of assembly, homodimer. It depends on Mg(2+) as a cofactor.

The catalysed reaction is N-(5-phospho-beta-D-ribosyl)anthranilate + diphosphate = 5-phospho-alpha-D-ribose 1-diphosphate + anthranilate. Its pathway is amino-acid biosynthesis; L-tryptophan biosynthesis; L-tryptophan from chorismate: step 2/5. Catalyzes the transfer of the phosphoribosyl group of 5-phosphorylribose-1-pyrophosphate (PRPP) to anthranilate to yield N-(5'-phosphoribosyl)-anthranilate (PRA). This chain is Anthranilate phosphoribosyltransferase, found in Vibrio campbellii (strain ATCC BAA-1116).